The sequence spans 323 residues: GTP 3',8-cyclase (323 aa).

The Radical SAM core domain occupies 4 to 233 (KYGREIDYLR…NGPAKYISIE (230 aa)). Arg13 provides a ligand contact to GTP. 2 residues coordinate [4Fe-4S] cluster: Cys20 and Cys24. Position 26 (Tyr26) interacts with S-adenosyl-L-methionine. Cys27 contributes to the [4Fe-4S] cluster binding site. Arg63 is a binding site for GTP. Gly67 lines the S-adenosyl-L-methionine pocket. A GTP-binding site is contributed by Thr94. Ser118 contributes to the S-adenosyl-L-methionine binding site. Lys154 contributes to the GTP binding site. Met188 lines the S-adenosyl-L-methionine pocket. The [4Fe-4S] cluster site is built by Cys250 and Cys253. 255 to 257 (RIR) is a GTP binding site. [4Fe-4S] cluster is bound at residue Cys267.

The protein belongs to the radical SAM superfamily. MoaA family. As to quaternary structure, monomer and homodimer. Requires [4Fe-4S] cluster as cofactor.

It catalyses the reaction GTP + AH2 + S-adenosyl-L-methionine = (8S)-3',8-cyclo-7,8-dihydroguanosine 5'-triphosphate + 5'-deoxyadenosine + L-methionine + A + H(+). The protein operates within cofactor biosynthesis; molybdopterin biosynthesis. Functionally, catalyzes the cyclization of GTP to (8S)-3',8-cyclo-7,8-dihydroguanosine 5'-triphosphate. This Clostridium perfringens (strain 13 / Type A) protein is GTP 3',8-cyclase.